The chain runs to 575 residues: Alpha-(1,6)-fucosyltransferase (575 aa).

The Cytoplasmic portion of the chain corresponds to 1–9 (MRAWTGSWR). A helical; Signal-anchor for type II membrane protein transmembrane segment spans residues 10–30 (WIMLILFAWGTLLFYIGGHLV). Residues 31–575 (RDNDHPDHSS…KYPTYPEAEK (545 aa)) are Lumenal-facing. 3 cysteine pairs are disulfide-bonded: Cys204/Cys266, Cys212/Cys230, and Cys218/Cys222. The GT23 domain occupies 206-493 (KARKLVCNIN…PDASANFHSL (288 aa)). At Ser278 the chain carries Phosphoserine. Positions 299 to 305 (PRPPYLP) match the SH3-binding motif. The important for donor substrate binding stretch occupies residues 365 to 366 (RR). A disulfide bridge connects residues Cys465 and Cys472. The SH3 domain occupies 502–563 (QNAHNQIAVY…PSYKVREKIE (62 aa)).

This sequence belongs to the glycosyltransferase 23 family. Tyrosine phosphorylated by PKDCC/VLK.

Its subcellular location is the golgi apparatus. It is found in the golgi stack membrane. The catalysed reaction is N(4)-{beta-D-GlcNAc-(1-&gt;2)-alpha-D-Man-(1-&gt;3)-[beta-D-GlcNAc-(1-&gt;2)-alpha-D-Man-(1-&gt;6)]-beta-D-Man-(1-&gt;4)-beta-D-GlcNAc-(1-&gt;4)-beta-D-GlcNAc}-L-asparaginyl-[protein] + GDP-beta-L-fucose = an N(4)-{beta-D-GlcNAc-(1-&gt;2)-alpha-D-Man-(1-&gt;3)-[beta-D-GlcNAc-(1-&gt;2)-alpha-D-Man-(1-&gt;6)]-beta-D-Man-(1-&gt;4)-beta-D-GlcNAc-(1-&gt;4)-[alpha-L-Fuc-(1-&gt;6)]-beta-D-GlcNAc}-L-asparaginyl-[protein] + GDP + H(+). It participates in protein modification; protein glycosylation. Its function is as follows. Catalyzes the addition of fucose in alpha 1-6 linkage to the first GlcNAc residue, next to the peptide chains in N-glycans. This is Alpha-(1,6)-fucosyltransferase (Fut8) from Rattus norvegicus (Rat).